The chain runs to 188 residues: Probable DNA-directed RNA polymerase subunit delta (188 aa).

The HTH HARE-type domain maps to 14–83 (LSMIEVARAI…GENKWGLRSW (70 aa)). The segment at 119–188 (EDAIDYSADD…EDEEDEDEEE (70 aa)) is disordered.

This sequence belongs to the RpoE family. RNAP is composed of a core of 2 alpha, a beta and a beta' subunits. The core is associated with a delta subunit and one of several sigma factors.

Its function is as follows. Participates in both the initiation and recycling phases of transcription. In the presence of the delta subunit, RNAP displays an increased specificity of transcription, a decreased affinity for nucleic acids, and an increased efficiency of RNA synthesis because of enhanced recycling. The sequence is that of Probable DNA-directed RNA polymerase subunit delta from Streptococcus equi subsp. zooepidemicus (strain H70).